We begin with the raw amino-acid sequence, 165 residues long: LIM domain transcription factor LMO4.2 (165 aa).

LIM zinc-binding domains lie at 21 to 83 and 85 to 147; these read KRCA…LFGN and GACS…ALIN.

Functionally, acts as a positive cofactor of GATA transcription factors to establish the identity of the ventral mesoderm during gastrulation. Down-regulation in the dorsal mesoderm is necessary for the proper formation of this territory since, when present, lmo4 may bind ldb1 and restrict the availability of this cofactor for Spemman organizer transcription factors. At neurula stages, suppresses primary neuron differentiation and modulates gene expression at the Isthmic Organizer of the midbrain-hindbrain boundary. The polypeptide is LIM domain transcription factor LMO4.2 (lmo4.2) (Xenopus tropicalis (Western clawed frog)).